The chain runs to 404 residues: Sodium/glutamate symporter (404 aa).

A run of 11 helical transmembrane segments spans residues 5 to 25 (FSTYETLALASLVLLLGYFLV), 33 to 53 (TFNIPEPVVGGFIVAIGLLIW), 69 to 89 (TTMMLVFFTSIGLSANFSRLI), 95 to 115 (LVVFLFIAALLIFGQNVIGIA), 161 to 181 (IAIACATFGLVFGGIIGGPVA), 219 to 239 (SLIETIAMISVCLLIGQYLDV), 245 to 265 (ALQLPTFVWCLFTGVIVRNIL), 277 to 297 (AIDVLGSVGLSIFLAIALMSL), 307 to 327 (IDVLIVLAIQVAFMAAFAIFI), 338 to 358 (AVVLSAGHCGFGLGATPTAIA), and 373 to 393 (AFLIVPMVGAFFIDLINAALL).

Belongs to the glutamate:Na(+) symporter (ESS) (TC 2.A.27) family.

Its subcellular location is the cell inner membrane. Its function is as follows. Catalyzes the sodium-dependent transport of glutamate. This Haemophilus influenzae (strain ATCC 51907 / DSM 11121 / KW20 / Rd) protein is Sodium/glutamate symporter.